Here is a 282-residue protein sequence, read N- to C-terminus: 4-hydroxybenzoate octaprenyltransferase (282 aa).

Helical transmembrane passes span I17–F37, I40–I60, A90–I110, F113–F133, A135–S155, F163–M183, L207–K227, C231–I251, and A262–I282.

Belongs to the UbiA prenyltransferase family. Requires Mg(2+) as cofactor.

It is found in the cell inner membrane. It carries out the reaction all-trans-octaprenyl diphosphate + 4-hydroxybenzoate = 4-hydroxy-3-(all-trans-octaprenyl)benzoate + diphosphate. It functions in the pathway cofactor biosynthesis; ubiquinone biosynthesis. Functionally, catalyzes the prenylation of para-hydroxybenzoate (PHB) with an all-trans polyprenyl group. Mediates the second step in the final reaction sequence of ubiquinone-8 (UQ-8) biosynthesis, which is the condensation of the polyisoprenoid side chain with PHB, generating the first membrane-bound Q intermediate 3-octaprenyl-4-hydroxybenzoate. The chain is 4-hydroxybenzoate octaprenyltransferase from Legionella pneumophila (strain Lens).